The following is a 241-amino-acid chain: Probable transcriptional regulatory protein Rpic_2388 (241 aa).

The protein belongs to the TACO1 family.

It localises to the cytoplasm. The chain is Probable transcriptional regulatory protein Rpic_2388 from Ralstonia pickettii (strain 12J).